Here is a 225-residue protein sequence, read N- to C-terminus: Histone H1.5 (225 aa).

The interval 1–23 (MSDVAVAETPAVKTPTKASKATK) is disordered. Ser2 bears the N-acetylserine mark. Positions 9–19 (TPAVKTPTKAS) are enriched in low complexity. The 77-residue stretch at 37-113 (AHPPFINMIT…GANGRFRLAV (77 aa)) folds into the H15 domain. Basic and acidic residues predominate over residues 145–156 (KKTVAKKTGDKV). The interval 145–225 (KKTVAKKTGD…RKAVGTAPKA (81 aa)) is disordered. The segment covering 157 to 175 (KKVKSPKRIAKPAVKKVTK) has biased composition (basic residues). Over residues 176–208 (KAAAPTKSAANETAPKKAAATEAAPKKAAVTKA) the composition is skewed to low complexity.

The protein belongs to the histone H1/H5 family.

It is found in the nucleus. Its subcellular location is the chromosome. Its function is as follows. Histones H1 are necessary for the condensation of nucleosome chains into higher-order structures. The sequence is that of Histone H1.5 (hil-5) from Caenorhabditis elegans.